Reading from the N-terminus, the 253-residue chain is Vitamin B12 import ATP-binding protein BtuD (253 aa).

Positions 4–236 (LQLSNVSVDT…NILSEVFEVD (233 aa)) constitute an ABC transporter domain. Position 32–39 (32–39 (GPNGAGKS)) interacts with ATP.

The protein belongs to the ABC transporter superfamily. Vitamin B12 importer (TC 3.A.1.13.1) family. In terms of assembly, the complex is composed of two ATP-binding proteins (BtuD), two transmembrane proteins (BtuC) and a solute-binding protein (BtuF).

The protein resides in the cell inner membrane. It carries out the reaction an R-cob(III)alamin(out) + ATP + H2O = an R-cob(III)alamin(in) + ADP + phosphate + H(+). Functionally, part of the ABC transporter complex BtuCDF involved in vitamin B12 import. Responsible for energy coupling to the transport system. The chain is Vitamin B12 import ATP-binding protein BtuD from Yersinia enterocolitica serotype O:8 / biotype 1B (strain NCTC 13174 / 8081).